Reading from the N-terminus, the 380-residue chain is UPF0754 membrane protein Bsph_0374 (380 aa).

The next 2 membrane-spanning stretches (helical) occupy residues 1-21 (MDNF…IGGV) and 357-377 (MITV…GLIV).

This sequence belongs to the UPF0754 family.

The protein localises to the cell membrane. This chain is UPF0754 membrane protein Bsph_0374, found in Lysinibacillus sphaericus (strain C3-41).